The chain runs to 601 residues: Deuterosome assembly protein 1 (601 aa).

3 coiled-coil regions span residues 14-59 (CEAE…NAQT), 86-196 (TQNY…GKKQ), and 226-277 (IEKL…ELQS). The tract at residues 305–329 (AQDNRKRVESSYSPSPKEAERKRKE) is disordered. Positions 354 to 397 (EEGLCSEQERLRSEISELTQELHQKEVTIATVMKKAALLERQLK) form a coiled coil. Phosphoserine is present on S544. The stretch at 555–586 (AAQHFLMEEERRAKELEKLLNTHIDELQRHTE) forms a coiled coil.

It belongs to the CEP63 family. As to quaternary structure, interacts with CEP152; the interaction is mutually exclusive with CEP63. As to expression, highly enriched in multicilia-abundant tissues (trachea and oviduct).

It localises to the cytoplasm. In terms of biological role, key structural component of the deuterosome, a structure that promotes de novo centriole amplification in multiciliated cells. Deuterosome-mediated centriole amplification occurs in terminally differentiated multiciliated cells and can generate more than 100 centrioles. Probably sufficient for the specification and formation of the deuterosome inner core. Interacts with CEP152 and recruits PLK4 to activate centriole biogenesis. The polypeptide is Deuterosome assembly protein 1 (Mus musculus (Mouse)).